The chain runs to 882 residues: Kelch repeat-containing protein 2 (882 aa).

Positions 41–60 are disordered; sequence TPTLPPNQHRGISGASTALP. Kelch repeat units follow at residues 99-143, 153-207, 213-267, 268-317, 319-369, and 371-417; these read RIFV…PPRV, AYVV…IIAS, KLYL…AYDN, KLWV…VYKH, MCVL…LMKN, and KLLI…LCPG. At Thr-455 the chain carries Phosphothreonine. The span at 480–496 shows a compositional bias: basic and acidic residues; the sequence is LDDKAFERKSDREEKKP. The disordered stretch occupies residues 480-516; it reads LDDKAFERKSDREEKKPQSSKVDSSINKESPGTGIKV. Over residues 498–509 the composition is skewed to polar residues; it reads SSKVDSSINKES. A Phosphoserine modification is found at Ser-509. Coiled coils occupy residues 550-685 and 728-881; these read KNLF…QKIT and NKIE…LEQK.

Interacts with KEL1.

The polypeptide is Kelch repeat-containing protein 2 (KEL2) (Saccharomyces cerevisiae (strain ATCC 204508 / S288c) (Baker's yeast)).